The following is a 270-amino-acid chain: Formamidopyrimidine-DNA glycosylase (270 aa).

The active-site Schiff-base intermediate with DNA is the P2. E3 serves as the catalytic Proton donor. The Proton donor; for beta-elimination activity role is filled by K58. 2 residues coordinate DNA: H90 and R109. The FPG-type zinc-finger motif lies at 237–270 (KVYGKEGEQCECGHTIERYTLGGRSTFLCSSCQK). R260 functions as the Proton donor; for delta-elimination activity in the catalytic mechanism.

Belongs to the FPG family. In terms of assembly, monomer. The cofactor is Zn(2+).

It carries out the reaction Hydrolysis of DNA containing ring-opened 7-methylguanine residues, releasing 2,6-diamino-4-hydroxy-5-(N-methyl)formamidopyrimidine.. The enzyme catalyses 2'-deoxyribonucleotide-(2'-deoxyribose 5'-phosphate)-2'-deoxyribonucleotide-DNA = a 3'-end 2'-deoxyribonucleotide-(2,3-dehydro-2,3-deoxyribose 5'-phosphate)-DNA + a 5'-end 5'-phospho-2'-deoxyribonucleoside-DNA + H(+). In terms of biological role, involved in base excision repair of DNA damaged by oxidation or by mutagenic agents. Acts as a DNA glycosylase that recognizes and removes damaged bases. Has a preference for oxidized purines, such as 7,8-dihydro-8-oxoguanine (8-oxoG). Has AP (apurinic/apyrimidinic) lyase activity and introduces nicks in the DNA strand. Cleaves the DNA backbone by beta-delta elimination to generate a single-strand break at the site of the removed base with both 3'- and 5'-phosphates. The sequence is that of Formamidopyrimidine-DNA glycosylase (mutM) from Zymomonas mobilis subsp. mobilis (strain ATCC 31821 / ZM4 / CP4).